A 1407-amino-acid polypeptide reads, in one-letter code: DNA-directed RNA polymerase subunit beta' (1407 aa).

Residues cysteine 70, cysteine 72, cysteine 85, and cysteine 88 each coordinate Zn(2+). Positions 460, 462, and 464 each coordinate Mg(2+). Residues cysteine 814, cysteine 888, cysteine 895, and cysteine 898 each coordinate Zn(2+).

Belongs to the RNA polymerase beta' chain family. As to quaternary structure, the RNAP catalytic core consists of 2 alpha, 1 beta, 1 beta' and 1 omega subunit. When a sigma factor is associated with the core the holoenzyme is formed, which can initiate transcription. Mg(2+) serves as cofactor. The cofactor is Zn(2+).

The catalysed reaction is RNA(n) + a ribonucleoside 5'-triphosphate = RNA(n+1) + diphosphate. Functionally, DNA-dependent RNA polymerase catalyzes the transcription of DNA into RNA using the four ribonucleoside triphosphates as substrates. In Salmonella choleraesuis (strain SC-B67), this protein is DNA-directed RNA polymerase subunit beta'.